Consider the following 696-residue polypeptide: Probable transporter efuK (696 aa).

The disordered stretch occupies residues 603–642; that stretch reads SLNGGKMQGASDAKSKVEQGQRAMRKQDEQNGSKWEPVFF. Positions 615-633 are enriched in basic and acidic residues; that stretch reads AKSKVEQGQRAMRKQDEQN.

The protein belongs to the OSBP family.

Its function is as follows. Probable transporter; part of the gene cluster that mediates the biosynthesis of enfumafungin, a glycosylated fernene-type triterpenoid with potent antifungal activity, mediated by its interaction with beta-1,3-glucan synthase and the fungal cell wall. Might be involved in transport of enfumafungin to and across organelle membranes. The sequence is that of Probable transporter efuK from Hormonema carpetanum.